A 353-amino-acid polypeptide reads, in one-letter code: Putative ABC transporter ATP-binding protein MG303 homolog (353 aa).

An ABC transporter domain is found at 72–312; the sequence is LYFYNLSVFV…MQLLQRYEIT (241 aa). An ATP-binding site is contributed by 107–114; it reads GPSGSGKT.

It belongs to the ABC transporter superfamily.

The sequence is that of Putative ABC transporter ATP-binding protein MG303 homolog from Mycoplasma pneumoniae (strain ATCC 29342 / M129 / Subtype 1) (Mycoplasmoides pneumoniae).